Reading from the N-terminus, the 309-residue chain is Olfactory receptor 8U9 (309 aa).

Residues 1-28 (MTQINCTQVTEFILVGLTDRQELKMPLF) are Extracellular-facing. Asparagine 5 is a glycosylation site (N-linked (GlcNAc...) asparagine). A helical membrane pass occupies residues 29 to 49 (VLFLSIYLFTVVGNLGLILLI). Residues 50–56 (RTDEKLN) lie on the Cytoplasmic side of the membrane. A helical membrane pass occupies residues 57–77 (TPMYFFLSNLAFVDFCYSSVI). Residues 78–97 (TPKMLGNFLYKQNSISFNAC) lie on the Extracellular side of the membrane. An intrachain disulfide couples cysteine 97 to cysteine 179. Residues 98-118 (AAQLGCFLAFMTAECLLLASM) form a helical membrane-spanning segment. The Cytoplasmic portion of the chain corresponds to 119–143 (AYDRYVAICNPLMYMVVMSPGICIQ). The helical transmembrane segment at 144–164 (LVAAPHSYSILVALFHTILTF) threads the bilayer. Residues 165–204 (RLSYCHSNIVNHFYCDDMPLLRLTCSDTRFKQLWIFACAG) lie on the Extracellular side of the membrane. The helical transmembrane segment at 205 to 225 (IMFISSLLIVFVSYMFIISAI) threads the bilayer. The Cytoplasmic segment spans residues 226-239 (LRMHSAEGRQKAFS). A helical transmembrane segment spans residues 240 to 260 (TCGSHMLAVTIFYGTLIFMYL). Residues 261 to 272 (QPSSSHALDTDK) lie on the Extracellular side of the membrane. The helical transmembrane segment at 273–293 (MASVFYTVIIPMLNPLIYSLQ) threads the bilayer. Topologically, residues 294-309 (NKEVKEALKKIIINKN) are cytoplasmic.

The protein belongs to the G-protein coupled receptor 1 family.

It localises to the cell membrane. Its function is as follows. Odorant receptor. This chain is Olfactory receptor 8U9 (OR8U9), found in Homo sapiens (Human).